Consider the following 478-residue polypeptide: Trigger factor (478 aa).

The segment at 1–41 is disordered; sequence MAELADAPDLGSGARKGVRVRLPPPAPHKNGGKNESRGSGQ. In terms of domain architecture, PPIase FKBP-type spans 197 to 279; the sequence is GDMLVVEYEV…IKEIKKKVLP (83 aa). Residues 455–472 are compositionally biased toward basic and acidic residues; it reads VEQKQEEEKKEEKEEVKN. The tract at residues 455 to 478 is disordered; it reads VEQKQEEEKKEEKEEVKNESQGNT.

It belongs to the FKBP-type PPIase family. Tig subfamily.

The protein resides in the cytoplasm. The catalysed reaction is [protein]-peptidylproline (omega=180) = [protein]-peptidylproline (omega=0). In terms of biological role, involved in protein export. Acts as a chaperone by maintaining the newly synthesized protein in an open conformation. Functions as a peptidyl-prolyl cis-trans isomerase. The chain is Trigger factor from Aquifex aeolicus (strain VF5).